Reading from the N-terminus, the 712-residue chain is Protein TAPT1 homolog (712 aa).

Residues 1–21 (MNNVPSTSRENSRNPSESSSS) show a composition bias toward low complexity. 2 disordered regions span residues 1 to 22 (MNNV…SSSI) and 44 to 66 (ITMS…EIET). 7 consecutive transmembrane segments (helical) span residues 196–216 (FFYL…GALL), 222–242 (TSAE…SMLI), 305–325 (TCGH…LVIL), 379–399 (HIFA…NWNI), 402–422 (FTEM…VDWL), 470–490 (GFIP…TFTL), and 497–517 (IIFG…GVVM). The segment covering 596-619 (EIRRSTDRETAVSHLTARSDERTP) has biased composition (basic and acidic residues). The segment at 596-712 (EIRRSTDRET…MPEQGVQRIE (117 aa)) is disordered. Residues 656-667 (TENNTNSNSEQA) show a composition bias toward polar residues. The segment covering 675 to 692 (TAAPVTSSASTNTNATSS) has biased composition (low complexity).

It belongs to the TAPT1 family.

The protein localises to the membrane. The sequence is that of Protein TAPT1 homolog from Caenorhabditis elegans.